Here is a 229-residue protein sequence, read N- to C-terminus: 3-dehydroquinate dehydratase (229 aa).

3-dehydroquinate is bound by residues 33–35 (EWR) and Arg65. His121 acts as the Proton donor/acceptor in catalysis. Lys146 functions as the Schiff-base intermediate with substrate in the catalytic mechanism. Residues Arg188, Ser207, and Gln211 each coordinate 3-dehydroquinate.

It belongs to the type-I 3-dehydroquinase family. As to quaternary structure, homodimer.

It catalyses the reaction 3-dehydroquinate = 3-dehydroshikimate + H2O. The protein operates within metabolic intermediate biosynthesis; chorismate biosynthesis; chorismate from D-erythrose 4-phosphate and phosphoenolpyruvate: step 3/7. Its function is as follows. Involved in the third step of the chorismate pathway, which leads to the biosynthesis of aromatic amino acids. Catalyzes the cis-dehydration of 3-dehydroquinate (DHQ) and introduces the first double bond of the aromatic ring to yield 3-dehydroshikimate. The polypeptide is 3-dehydroquinate dehydratase (Lactococcus lactis subsp. cremoris (strain SK11)).